We begin with the raw amino-acid sequence, 456 residues long: GTPase Der (456 aa).

EngA-type G domains are found at residues phenylalanine 3–glutamate 167 and isoleucine 185–asparagine 360. GTP is bound by residues glycine 9 to serine 16, aspartate 56 to leucine 60, asparagine 119 to glutamate 122, glycine 191 to serine 198, aspartate 238 to leucine 242, and asparagine 303 to aspartate 306. A KH-like domain is found at arginine 361 to alanine 445.

It belongs to the TRAFAC class TrmE-Era-EngA-EngB-Septin-like GTPase superfamily. EngA (Der) GTPase family. In terms of assembly, associates with the 50S ribosomal subunit.

In terms of biological role, GTPase that plays an essential role in the late steps of ribosome biogenesis. This chain is GTPase Der, found in Bradyrhizobium sp. (strain BTAi1 / ATCC BAA-1182).